Consider the following 505-residue polypeptide: ATP synthase subunit alpha, chloroplastic (505 aa).

170–177 lines the ATP pocket; that stretch reads GDRQTGKT.

The protein belongs to the ATPase alpha/beta chains family. In terms of assembly, F-type ATPases have 2 components, CF(1) - the catalytic core - and CF(0) - the membrane proton channel. CF(1) has five subunits: alpha(3), beta(3), gamma(1), delta(1), epsilon(1). CF(0) has four main subunits: a, b, b' and c.

Its subcellular location is the plastid. It localises to the chloroplast thylakoid membrane. It catalyses the reaction ATP + H2O + 4 H(+)(in) = ADP + phosphate + 5 H(+)(out). Produces ATP from ADP in the presence of a proton gradient across the membrane. The alpha chain is a regulatory subunit. In Oenothera parviflora (Small-flowered evening primrose), this protein is ATP synthase subunit alpha, chloroplastic.